A 976-amino-acid chain; its full sequence is 5'-3' exoribonuclease 2 homolog (976 aa).

The CCHC-type zinc finger occupies 264–281 (RACELCGQYGHELKECRG). The span at 411-420 (DEERFKENQK) shows a compositional bias: basic and acidic residues. The segment at 411 to 442 (DEERFKENQKNKKARMQQYGRGRGGRGRGRGQ) is disordered. The interaction with paxt-1 stretch occupies residues 535–788 (DIRLYESGWK…GICVLYEDPE (254 aa)). The disordered stretch occupies residues 815–976 (WNERRDGRFN…GGYQGNSSWR (162 aa)). Positions 856–866 (DRQGGNDNYRG) are enriched in low complexity.

Belongs to the 5'-3' exonuclease family. XRN2/RAT1 subfamily. As to quaternary structure, interacts with paxt-1 (via N-terminus); the interaction is direct and results in stabilization of xrn-2 in the complex.

The protein resides in the nucleus. Its function is as follows. Possesses 5'-&gt;3' exoribonuclease activity. Plays a role in maintenance of steady-state concentration and turnover of microRNAs (miRNA) by degradation of mature miRNA. Degradation role is enhanced when in complex with paxt-1. Partially redundant to xrn-1 in miRNA guide strand degradation. Implicated in differential regulation of mRNAs such as let-7 by controlling the accumulation of mature miRNA. Positively regulates molting of the pharyngeal cuticle. This chain is 5'-3' exoribonuclease 2 homolog, found in Caenorhabditis briggsae.